The primary structure comprises 193 residues: Auxin-responsive protein IAA23 (193 aa).

A compositionally biased stretch (polar residues) spans 1-12; that stretch reads MSTSSGADSSPP. A disordered region spans residues 1 to 66; that stretch reads MSTSSGADSS…SPKARAVGWP (66 aa). Residues 21-36 show a composition bias toward low complexity; sequence TALTLALPGSSSSSSS. Positions 23 to 27 match the EAR-like (transcriptional repression) motif; it reads LTLAL. Positions 39-53 are enriched in basic and acidic residues; it reads DPERKRAAHADHADA. One can recognise a PB1 domain in the interval 83-191; sequence AKLVKVAVDG…EAVNLSPRRS (109 aa).

This sequence belongs to the Aux/IAA family. In terms of assembly, homodimers and heterodimers. As to expression, highly expressed in roots. Expressed in seedlings.

The protein localises to the nucleus. Functionally, aux/IAA proteins are short-lived transcriptional factors that function as repressors of early auxin response genes at low auxin concentrations. This chain is Auxin-responsive protein IAA23 (IAA23), found in Oryza sativa subsp. japonica (Rice).